Reading from the N-terminus, the 368-residue chain is Flap endonuclease 1 (368 aa).

Residues 1 to 104 (MGIHDLSKVI…GELLKRGARR (104 aa)) are N-domain. Residue Asp-34 participates in Mg(2+) binding. Residues Arg-47 and Arg-70 each contribute to the DNA site. Asp-86 lines the Mg(2+) pocket. Residues 103–123 (RRKEAQANLEEATEQGDTEQM) form a disordered region. Residues 122–251 (QMEKFSRRLV…QKAYQLIKEH (130 aa)) form an I-domain region. Mg(2+) contacts are provided by Glu-158, Glu-160, Asp-179, and Asp-181. Glu-158 serves as a coordination point for DNA. Residues Gly-229 and Asp-231 each contribute to the DNA site. Asp-231 serves as a coordination point for Mg(2+). Residues 334-342 (QQGRLDSFF) are interaction with PCNA.

This sequence belongs to the XPG/RAD2 endonuclease family. FEN1 subfamily. As to quaternary structure, interacts with PCNA. Three molecules of FEN1 bind to one PCNA trimer with each molecule binding to one PCNA monomer. PCNA stimulates the nuclease activity without altering cleavage specificity. Mg(2+) serves as cofactor. In terms of processing, phosphorylated. Phosphorylation upon DNA damage induces relocalization to the nuclear plasma.

Its subcellular location is the nucleus. The protein localises to the nucleolus. The protein resides in the nucleoplasm. It is found in the mitochondrion. Structure-specific nuclease with 5'-flap endonuclease and 5'-3' exonuclease activities involved in DNA replication and repair. During DNA replication, cleaves the 5'-overhanging flap structure that is generated by displacement synthesis when DNA polymerase encounters the 5'-end of a downstream Okazaki fragment. It enters the flap from the 5'-end and then tracks to cleave the flap base, leaving a nick for ligation. Also involved in the long patch base excision repair (LP-BER) pathway, by cleaving within the apurinic/apyrimidinic (AP) site-terminated flap. Acts as a genome stabilization factor that prevents flaps from equilibrating into structures that lead to duplications and deletions. Also possesses 5'-3' exonuclease activity on nicked or gapped double-stranded DNA, and exhibits RNase H activity. Also involved in replication and repair of rDNA and in repairing mitochondrial DNA. This Monosiga brevicollis (Choanoflagellate) protein is Flap endonuclease 1.